A 292-amino-acid polypeptide reads, in one-letter code: Protein sarah (292 aa).

Residues 1 to 51 (MSDAAKSNNNASADAPDPTTPDATGEADAANAATPTTPRGNHNNNNSANGR) are compositionally biased toward low complexity. The tract at residues 1 to 111 (MSDAAKSNNN…TEPEVDADSF (111 aa)) is disordered. Phosphoserine occurs at positions 67, 72, and 100. A compositionally biased stretch (acidic residues) spans 98–111 (VDSDTEPEVDADSF). Residues Thr-102 and Thr-196 each carry the phosphothreonine modification. A phosphoserine mark is found at Ser-215 and Ser-219. At Thr-246 the chain carries Phosphothreonine.

This sequence belongs to the RCAN family. Interacts with Pp2B-14D, CanA-14F and CanB2. Post-translationally, phosphorylation at Ser-215 and Ser-219 is essential for calcineurin activation and completion of female meiosis. Sgg is required for phosphorylation of Ser-215 in activated eggs. Ser-100, Thr-102 and Ser-219 are highly phosphorylated in both ovaries and activated eggs; however, phosphorylation at Ser-100 or Thr-102 is not required for sra function in completion of female meiosis. Expressed in central nervous system of the third instar larvae, with a relatively intense signal in the brain and weak signals in the ventral ganglion. Relatively low, but ubiquitous expression level is observed in leg and wing imaginal disks, no signal is detected in the eye-antennal disks. Expressed in all neurons in the adult brain.

In terms of biological role, required for elongation of meiosis I spindle. Critical for ovulation, meiotic progression in oocytes and female courtship behavior, including their postmating changes. Regulates female meiosis by controlling calcineurin activity in the germline. Has a role in calcium signaling during egg activation; bcd mRNA polyadenylation and translation in the oocyte. This Drosophila melanogaster (Fruit fly) protein is Protein sarah (sra).